A 565-amino-acid chain; its full sequence is Nephronectin (565 aa).

An N-terminal signal peptide occupies residues 1 to 19 (MDFLLALVLVSSLYLQAAA). The region spanning 52 to 87 (SWGQCQPVCQPRCKHGECIGPNKCKCHPGYAGKTCN) is the EGF-like 1 domain. 6 disulfides stabilise this stretch: cysteine 56–cysteine 69, cysteine 60–cysteine 75, cysteine 77–cysteine 86, cysteine 93–cysteine 104, cysteine 100–cysteine 113, and cysteine 115–cysteine 127. Positions 89–128 (DLNECGLKPRPCKHRCMNTYGSYKCYCLNGYMLMPDGSCS) constitute an EGF-like 2; calcium-binding domain. The 37-residue stretch at 132 to 168 (TCSMANCQYGCDVVKGQIRCQCPSPGLQLAPDGRTCV) folds into the EGF-like 3 domain. The 45-residue stretch at 169–213 (DVDECATGRASCPRFRQCVNTFGSYICKCHKGFDLMYIGGKYQCH) folds into the EGF-like 4; calcium-binding domain. 6 disulfides stabilise this stretch: cysteine 173-cysteine 186, cysteine 180-cysteine 195, cysteine 197-cysteine 212, cysteine 218-cysteine 231, cysteine 225-cysteine 240, and cysteine 242-cysteine 253. An EGF-like 5; calcium-binding domain is found at 214-254 (DIDECSLGQYQCSSFARCYNIRGSYKCKCKEGYQGDGLTCV). Residues 301–389 (YIPPIITNRP…KPRGDVFIPR (89 aa)) form a disordered region. Low complexity predominate over residues 304–316 (PIITNRPTSKPTT). Residues 317–347 (RPTPKPTPIPTPPPPPPLPTELRTPLPPTTP) show a composition bias toward pro residues. The Integrin interaction motif lies at 382 to 384 (RGD). The MAM domain maps to 420–563 (HSCNFDHGLC…VSLKKGHCSE (144 aa)).

The protein belongs to the nephronectin family. Homodimer and homotrimer. As to expression, expressed in kidney and lung and to a lower extent in brain, pregnant uterus, placenta, thyroid gland and blood vessels.

The protein localises to the secreted. The protein resides in the extracellular space. Its subcellular location is the extracellular matrix. Its function is as follows. Functional ligand of integrin alpha-8/beta-1 in kidney development. Regulates the expression of GDNF with integrin alpha-8/beta-1 which is essential for kidney development. May also play a role in the development and function of various tissues, regulating cell adhesion, spreading and survival through the binding of several integrins. The protein is Nephronectin (NPNT) of Homo sapiens (Human).